Here is a 180-residue protein sequence, read N- to C-terminus: NADH-quinone oxidoreductase subunit I (180 aa).

4Fe-4S ferredoxin-type domains are found at residues 48–80 (IVLTRDPDGDERCVACNLCAVACPVGCISLQKS) and 90–119 (EFFRINFSRCIFCGLCEEACPTTAIQLTPD). [4Fe-4S] cluster contacts are provided by Cys60, Cys63, Cys66, Cys70, Cys99, Cys102, Cys105, and Cys109. Residues 161–174 (KPKGDAENEAKPID) show a composition bias toward basic and acidic residues. A disordered region spans residues 161 to 180 (KPKGDAENEAKPIDVKSLLP).

This sequence belongs to the complex I 23 kDa subunit family. NDH-1 is composed of 13 different subunits. Subunits NuoA, H, J, K, L, M, N constitute the membrane sector of the complex. It depends on [4Fe-4S] cluster as a cofactor.

It localises to the cell inner membrane. The enzyme catalyses a quinone + NADH + 5 H(+)(in) = a quinol + NAD(+) + 4 H(+)(out). NDH-1 shuttles electrons from NADH, via FMN and iron-sulfur (Fe-S) centers, to quinones in the respiratory chain. The immediate electron acceptor for the enzyme in this species is believed to be ubiquinone. Couples the redox reaction to proton translocation (for every two electrons transferred, four hydrogen ions are translocated across the cytoplasmic membrane), and thus conserves the redox energy in a proton gradient. The polypeptide is NADH-quinone oxidoreductase subunit I (Shewanella oneidensis (strain ATCC 700550 / JCM 31522 / CIP 106686 / LMG 19005 / NCIMB 14063 / MR-1)).